The chain runs to 197 residues: dITP/XTP pyrophosphatase (197 aa).

Residue 8-13 coordinates substrate; that stretch reads TGNPGK. Mg(2+)-binding residues include E40 and D69. The Proton acceptor role is filled by D69. Substrate-binding positions include S70, 154–157, K177, and 182–183; these read FGYD and HR.

This sequence belongs to the HAM1 NTPase family. Homodimer. Mg(2+) serves as cofactor.

It carries out the reaction XTP + H2O = XMP + diphosphate + H(+). The enzyme catalyses dITP + H2O = dIMP + diphosphate + H(+). The catalysed reaction is ITP + H2O = IMP + diphosphate + H(+). Pyrophosphatase that catalyzes the hydrolysis of nucleoside triphosphates to their monophosphate derivatives, with a high preference for the non-canonical purine nucleotides XTP (xanthosine triphosphate), dITP (deoxyinosine triphosphate) and ITP. Seems to function as a house-cleaning enzyme that removes non-canonical purine nucleotides from the nucleotide pool, thus preventing their incorporation into DNA/RNA and avoiding chromosomal lesions. The protein is dITP/XTP pyrophosphatase of Yersinia pseudotuberculosis serotype I (strain IP32953).